A 109-amino-acid polypeptide reads, in one-letter code: T cell receptor alpha variable 25 (109 aa).

The first 19 residues, 1–19 (MLLITSMLVLWMQLSQVNG), serve as a signal peptide directing secretion. The Ig-like domain maps to 20-109 (QQVMQIPQYQ…TDVGTYFCAG (90 aa)). The cysteines at positions 41 and 107 are disulfide-linked. N-linked (GlcNAc...) asparagine glycans are attached at residues Asn42 and Asn89.

Alpha-beta TR is a heterodimer composed of an alpha and beta chain; disulfide-linked. The alpha-beta TR is associated with the transmembrane signaling CD3 coreceptor proteins to form the TR-CD3 (TcR or TCR). The assembly of alpha-beta TR heterodimers with CD3 occurs in the endoplasmic reticulum where a single alpha-beta TR heterodimer associates with one CD3D-CD3E heterodimer, one CD3G-CD3E heterodimer and one CD247 homodimer forming a stable octameric structure. CD3D-CD3E and CD3G-CD3E heterodimers preferentially associate with TR alpha and TR beta chains, respectively. The association of the CD247 homodimer is the last step of TcR assembly in the endoplasmic reticulum and is required for transport to the cell surface.

Its subcellular location is the cell membrane. In terms of biological role, v region of the variable domain of T cell receptor (TR) alpha chain that participates in the antigen recognition. Alpha-beta T cell receptors are antigen specific receptors which are essential to the immune response and are present on the cell surface of T lymphocytes. Recognize peptide-major histocompatibility (MH) (pMH) complexes that are displayed by antigen presenting cells (APC), a prerequisite for efficient T cell adaptive immunity against pathogens. Binding of alpha-beta TR to pMH complex initiates TR-CD3 clustering on the cell surface and intracellular activation of LCK that phosphorylates the ITAM motifs of CD3G, CD3D, CD3E and CD247 enabling the recruitment of ZAP70. In turn ZAP70 phosphorylates LAT, which recruits numerous signaling molecules to form the LAT signalosome. The LAT signalosome propagates signal branching to three major signaling pathways, the calcium, the mitogen-activated protein kinase (MAPK) kinase and the nuclear factor NF-kappa-B (NF-kB) pathways, leading to the mobilization of transcription factors that are critical for gene expression and essential for T cell growth and differentiation. The T cell repertoire is generated in the thymus, by V-(D)-J rearrangement. This repertoire is then shaped by intrathymic selection events to generate a peripheral T cell pool of self-MH restricted, non-autoaggressive T cells. Post-thymic interaction of alpha-beta TR with the pMH complexes shapes TR structural and functional avidity. The sequence is that of T cell receptor alpha variable 25 from Homo sapiens (Human).